Here is a 978-residue protein sequence, read N- to C-terminus: LRR receptor-like serine/threonine-protein kinase ER1 (978 aa).

Residues 1–24 (MTPAPAAASYRALVALLLVAVAVA) form the signal peptide. Residues 25–577 (DDGSTLLEIK…GHQQKPLISK (553 aa)) lie on the Extracellular side of the membrane. N-linked (GlcNAc...) asparagine glycans are attached at residues asparagine 62 and asparagine 71. LRR repeat units lie at residues 66 to 87 (AVAA…AVGR), 88 to 112 (LKGI…IGDC), 114 to 136 (SLKT…VSKL), 137 to 159 (KHIE…TLSQ), 160 to 184 (LPNL…IYWN), 186 to 208 (VLQY…ICQL), 209 to 232 (TGLW…IGNC), 233 to 257 (TSFQ…GFLQ), 259 to 278 (ATLS…VIGL), 279 to 302 (MQAL…ILGN), 304 to 327 (TYTE…LGNM), 328 to 350 (STLH…EFGK), 352 to 375 (TGLF…ISSC), 377 to 399 (NLNS…LHKL), 400 to 423 (ESMT…LSRI), 424 to 447 (NNLD…IGSL), 449 to 470 (HLLR…EIGN), 471 to 494 (LRSI…ELGM), 496 to 518 (QNLM…LMNC), and 519 to 543 (FSLN…NFSR). N-linked (GlcNAc...) asparagine glycans are attached at residues asparagine 218 and asparagine 231. Residues asparagine 302 and asparagine 326 are each glycosylated (N-linked (GlcNAc...) asparagine). Residues asparagine 371, asparagine 389, and asparagine 406 are each glycosylated (N-linked (GlcNAc...) asparagine). Residue asparagine 454 is glycosylated (N-linked (GlcNAc...) asparagine). N-linked (GlcNAc...) asparagine glycans are attached at residues asparagine 507, asparagine 525, and asparagine 540. A helical transmembrane segment spans residues 578–598 (AAILGIAVGGLVILLMILVAV). At 599-978 (CRPHSPPVFK…FGEVISQNTE (380 aa)) the chain is on the cytoplasmic side. The region spanning 645–916 (LSEKYIIGYG…EVVRVLDCLV (272 aa)) is the Protein kinase domain. ATP contacts are provided by residues 651-659 (IGYGASSTV) and lysine 673. The active-site Proton acceptor is aspartate 771.

It belongs to the protein kinase superfamily. Ser/Thr protein kinase family.

The protein resides in the cell membrane. The catalysed reaction is L-seryl-[protein] + ATP = O-phospho-L-seryl-[protein] + ADP + H(+). It carries out the reaction L-threonyl-[protein] + ATP = O-phospho-L-threonyl-[protein] + ADP + H(+). Its function is as follows. Receptor kinase involved in the regulation of thermotolerance. Functions as a positive regulator of heat tolerance. May be involved in the regulation of cell proliferation and cell growth. In Oryza sativa subsp. japonica (Rice), this protein is LRR receptor-like serine/threonine-protein kinase ER1.